The primary structure comprises 296 residues: NAD kinase (296 aa).

The active-site Proton acceptor is the Asp73. Residues 73–74 (DG), Lys78, 151–152 (NE), Arg178, Asp180, and 191–196 (TAHAMS) each bind NAD(+).

The protein belongs to the NAD kinase family. It depends on a divalent metal cation as a cofactor.

The protein localises to the cytoplasm. The catalysed reaction is NAD(+) + ATP = ADP + NADP(+) + H(+). Involved in the regulation of the intracellular balance of NAD and NADP, and is a key enzyme in the biosynthesis of NADP. Catalyzes specifically the phosphorylation on 2'-hydroxyl of the adenosine moiety of NAD to yield NADP. In Francisella tularensis subsp. holarctica (strain FTNF002-00 / FTA), this protein is NAD kinase.